Here is a 426-residue protein sequence, read N- to C-terminus: D-tagatose-1,6-bisphosphate aldolase subunit KbaZ (426 aa).

The protein belongs to the GatZ/KbaZ family. KbaZ subfamily. Forms a complex with KbaY.

It functions in the pathway carbohydrate metabolism; D-tagatose 6-phosphate degradation; D-glyceraldehyde 3-phosphate and glycerone phosphate from D-tagatose 6-phosphate: step 2/2. Its function is as follows. Component of the tagatose-1,6-bisphosphate aldolase KbaYZ that is required for full activity and stability of the Y subunit. Could have a chaperone-like function for the proper and stable folding of KbaY. When expressed alone, KbaZ does not show any aldolase activity. The protein is D-tagatose-1,6-bisphosphate aldolase subunit KbaZ of Escherichia coli O7:K1 (strain IAI39 / ExPEC).